We begin with the raw amino-acid sequence, 197 residues long: Holliday junction branch migration complex subunit RuvA (197 aa).

A domain I region spans residues 1-63; it reads MFDYIKGQLT…EDAHLLFGFH (63 aa). Residues 64–142 are domain II; sequence TENEKDVFLK…TIPEGGQAQQ (79 aa). The segment at 142 to 146 is flexible linker; sequence QMPKA. Residues 147 to 197 are domain III; that stretch reads KGNQQLDEAIEALLALGYKATELKKIRAFFEGTDDTAEQYIKSALKMLMKG.

Belongs to the RuvA family. Homotetramer. Forms an RuvA(8)-RuvB(12)-Holliday junction (HJ) complex. HJ DNA is sandwiched between 2 RuvA tetramers; dsDNA enters through RuvA and exits via RuvB. An RuvB hexamer assembles on each DNA strand where it exits the tetramer. Each RuvB hexamer is contacted by two RuvA subunits (via domain III) on 2 adjacent RuvB subunits; this complex drives branch migration. In the full resolvosome a probable DNA-RuvA(4)-RuvB(12)-RuvC(2) complex forms which resolves the HJ.

It localises to the cytoplasm. The RuvA-RuvB-RuvC complex processes Holliday junction (HJ) DNA during genetic recombination and DNA repair, while the RuvA-RuvB complex plays an important role in the rescue of blocked DNA replication forks via replication fork reversal (RFR). RuvA specifically binds to HJ cruciform DNA, conferring on it an open structure. The RuvB hexamer acts as an ATP-dependent pump, pulling dsDNA into and through the RuvAB complex. HJ branch migration allows RuvC to scan DNA until it finds its consensus sequence, where it cleaves and resolves the cruciform DNA. The polypeptide is Holliday junction branch migration complex subunit RuvA (Streptococcus uberis (strain ATCC BAA-854 / 0140J)).